Here is a 1354-residue protein sequence, read N- to C-terminus: MVKLSGIILLSLVWLKLNNSYEIRERISNKNNPDDDILKINVEEDKKKICNNILIFLNADDILTENNKYSFMGKCEKLIDDIKNENNSPDITNEFALSLMHMRSKHTITSSINNNKALKNIIISLDKSMSEPEVINRVKHIIRFNKYLAGKLSYKNIGESLVLRVSSHERMRRSKRELVRNILKDFHIYGLYFDLKSENSTLLKNQESESLINIKNEKLCQTYIHLCQKFYEQTSVYYKIKTILNEVIKHTKDNYALEGEYDISKLFSLENSISQVSQHSDHMLTNESLIYDMNKSNYIKYNQLIHEVIPEDGNIEEQVKKGNGRYIVVVKNLKKAIGNSENYDNIMNIIKKYLINVTKNNKEILDMVMELGNEDIEQFMTQLVFFIHYGFLLITEDKHMIYLSDMIPTYTNLYRANEVLLLHIMDIKFESDDFNKYEKYKFETSDNDKETYSLLNEIDSITQLPKLSENVANDYFSKIMDKDAYTMLTLDKGINKYQFYFTMAFKDCNINQNYTPLAKDLWTELIYTFDNFGWFYFNPNKIMSSISKSNFIRHVLVSRNFILKNMESLIYLDTQISRLMDMIGLSFLADKSEYILDLSLSNYLFLYVNEYHIFKKDENVKLIHTYDYIDSIANNYYYFSEKKYPVFKTDYSSKLYTNFPNVYSLAYQLFNELAINMNISNTPLKKKLKNKSNYAYFTILNLIGPNHDIYSRGPRLIFAAYMLTLVFFIESQIDISRYRPNDMYFMKKAMPLLAPINRDDFNILKKRCSLLTDFIKINRNKAKNEHSRVEEYIKILNLVTILLWGKESNKSLYYDNDVSLYKKLLIACVFNGGITVQEKVIKSIKRSCNMEQYGLNKSNIEDFVNVNLSVYQWNPDILEKIATAFTLTCKVHNMIYEPFDVHKVDAKDYYKLAVAPDMVKTYHCFLLGRQAERLLESLILKKNFVKFKVEDAIDVYEFFYVTRILSKNPREDFELFLKNKKEYQKKQKDEIIKNSKLDENVTDILFQNYECYWFKSYENFKSLWMHAASNLGPGAYLRNFFSEIWNNMGTLFKKQSKVRDVEYFNINLIGGTLIDYYSPLLKSEEHCRNVTQKLFISMKDSGTKSRIEIPDEIKSKYFQCKLDYYKNNHSDPVHKIYSRDFLENKVYVFKQPYYLLSNIDDKNKKQLLRLFITETTLQYLLLDDIQIPECLGRCTIEHFNKVLLTTANAKPHETIIYNGLIPENCKSKIRKEMKIFIHSSFVHNLTRDYLTGELIRTQDIQNGDVHVCMGSDTYYTENILTDQHFDLTHKPQFNFPENNNYRVFLKKNINKIAKNPESQCYVHYELSVLDTDIPDPYREIGKDLITNIELLESK.

The N-terminal stretch at 1 to 20 is a signal peptide; sequence MVKLSGIILLSLVWLKLNNS. Cystine bridges form between Cys-50-Cys-75 and Cys-220-Cys-227. A helical transmembrane segment spans residues 716-736; that stretch reads LIFAAYMLTLVFFIESQIDIS. 3 disulfides stabilise this stretch: Cys-768–Cys-828, Cys-848–Cys-889, and Cys-924–Cys-1011.

Component of the RhopH complex. RhopH complex is composed of CLAG3.1/CLAG3.2, RhopH2 and RhopH3 with a 1:1:1 subunit stoichiometry. Interacts with CLAG3.1/CLAG3.2.

It localises to the host cell membrane. The protein localises to the parasitophorous vacuole membrane. Its subcellular location is the host cytoplasm. It is found in the cytoplasm. The protein resides in the cytoplasmic vesicle. It localises to the secretory vesicle. The protein localises to the rhoptry. Functionally, participates in the formation of new permeability pathways in Plasmodium-infected erythrocytes enabling the uptake of nutrients from the blood plasma. Required for maintaining invasion capacity of merozoites. Required for parasite growth and proliferation. The chain is High molecular weight rhoptry protein 2 from Plasmodium berghei (strain Anka).